The chain runs to 446 residues: Chromosomal replication initiator protein DnaA (446 aa).

Residues 1–82 (MENILDLWNQ…ELSIKFVIPQ (82 aa)) are domain I, interacts with DnaA modulators. The domain II stretch occupies residues 83-103 (NQDVEDFMPKPQVKKAVKEDT). Positions 104–332 (SDFPQNMLNP…VAYSSLINKD (229 aa)) are domain III, AAA+ region. ATP contacts are provided by Gly154, Leu155, Gly156, Lys157, and Thr158. Thr158 provides a ligand contact to Mg(2+). The Initiator specific motif (ISM) motif lies at 182–206 (SEKFTNEFINSIRDNKAVDFRNRYR). Mg(2+) is bound by residues Asp214 and Asp215. Residues 333–346 (INADLAAEALKDII) form a linker region. Residues 347 to 446 (PSSKPKVITI…HVKEIKEQLK (100 aa)) are domain IV, binds dsDNA.

The protein belongs to the DnaA family. As to quaternary structure, the DNA replisome assembles sequentially on oriC in this order; DnaA, DnaD, DnaB, DnaI-DnaC helicase. Oligomerizes as a right-handed, spiral filament on DNA at oriC. Forms an ATP-dependent helix on DNA at oriC; both DnaD and YabA inhibit formation of the DnaA helix. Forms an ATP-dependent oligomer, formation is stimulated by ds- and ssDNA; monomeric ADP-Soj inhibits oligomer formation. Interacts with DnaD. Interacts with YabA, and via YabA, with the replication machinery subunit beta sliding clamp DnaN. Interacts with YabA via domain IIIa (residues 109-275). Isolated domain I forms a 1:1 complex with SirA. Interacts with Soj, probably via domain III. Interacts via domains I and III with CcrZ. Interacts via domain IV with skin prophage-like element protein YqaH.

The protein resides in the cytoplasm. It is found in the nucleoid. It catalyses the reaction ATP + H2O = ADP + phosphate + H(+). Oligomerization of DnaA can be controlled by Soj; monomeric ADP-Soj inhibits formation of the DnaA helix. YabA prevents the cooperative binding of DnaA-ATP to oriC-containing sequences; increased levels of DnaN (beta sliding clamp subunit of DNA polymerase) removes YabA from association with DnaA on the chromosome, enabling increased association of DnaA with its chromosomal binding sites. Both Soj and YabA chase DnaA from oriC site, YabA tethers DnaA to the DNA replication fork via the beta sliding clamp subunit DnaN. SirA antagonizes the ability of DnaA to bind to the replication origin, and thus decreases replication inititation during sporulation. Small protein YqaH, part of the skin prophage-like element, binds to DnaA and antagonizes its replication initiation and transcriptional regulation activities. Functionally, plays an essential role in the initiation and regulation of chromosomal replication. ATP-DnaA binds to the origin of replication (oriC) to initiate formation of the DNA replication initiation complex once per cell cycle. Binds directly to oriC at a 9 bp consensus (DnaA box): 5'-TTATCCACA-3' and separates the double-stranded (ds)DNA. Forms a right-handed helical filament on oriC DNA; dsDNA binds to the exterior of the filament while single-stranded (ss)DNA is stabilized in the filament's interior. The ATP-DnaA-oriC complex binds and stabilizes one strand of the AT-rich DNA unwinding element (DUE or basal unwinding system, BUS), permitting loading of DNA polymerase. Binds ATP with high affinity, ADP with lower affinity, but not AMP, cAMP or cGMP; ATP stimulates binding to DnaA boxes. Once bound promotes sequence-specific strand separation of DnaA-trios (3'-GAT-5' consensus) adjacent to oriC in the presence of ATP but not ADP. Domains III and IV are sufficient to separate dsDNA strands. The 'initiator specific motif' (ISM) of domain III contacts the middle adenine residue of the DnaA-trio probably stretching and stabilizing ssDNA. DnaA-trio recognition is co-operative and depends on DnaA self-assembly. The ssDNA serves as an assembly region for the replication machinery. Tethered to DnaN (beta sliding clamp subunit of DNA polymerase) and thus replication forks by YabA. During replication initiation DnaA-ATP binds cooperatively to sequences in oriC. YabA prevents this cooperative binding while still allowing DnaA to bind DNA. During the cell cycle an initial phase occurs in which DnaA is associated with origin regions, then the origin regions become spatially separate from the centrally sequestered DnaA molecules, and most DnaA molecules are unable to reassociate with origin regions. Does not require YabA to bind DNA. During sporulation SirA prevents DnaA association with the replication origin to prevent excessive chromosome replication. Overexpression induces the SOS response; increasing expression of downstream dnaN blocks this induction. Over-initiation of DNA replication is very deleterious; isolated suppressors in relA, ndrR, dnaC, cshA and crrZ increase replication elongation, decrease replication inititation or lead to a decrease in the replicative DNA helicase. Binds acidic phospholipids. Its function is as follows. The half-life of ADP-DnaA is 1.5 minutes, of ATP-DnaA is 5 minutes at 37 degrees Celsius; in E.coli the half-life of ADP-DnaA is about 45 minutes. Also acts as a transcriptional regulator. DnaA inhibits its own gene expression. DnaA binds specifically to the promoter regions of at least 20 operons (56 genes), including itself, sda and dnaB, and probably controls their expression in response to DNA replication inhibition. This Bacillus subtilis (strain 168) protein is Chromosomal replication initiator protein DnaA.